Consider the following 549-residue polypeptide: Undecaprenyl phosphate-alpha-4-amino-4-deoxy-L-arabinose arabinosyl transferase 2 (549 aa).

The next 12 membrane-spanning stretches (helical) occupy residues L9 to I29, L80 to A102, S112 to A132, N133 to L153, F176 to L196, L204 to L224, F259 to F279, G290 to G310, L312 to A332, A342 to V362, S377 to F397, and C402 to P422.

It belongs to the glycosyltransferase 83 family.

The protein localises to the cell inner membrane. It catalyses the reaction 4-amino-4-deoxy-alpha-L-arabinopyranosyl di-trans,octa-cis-undecaprenyl phosphate + lipid IVA = lipid IIA + di-trans,octa-cis-undecaprenyl phosphate.. It participates in lipopolysaccharide metabolism; 4-amino-4-deoxy-beta-L-arabinose-lipid A biosynthesis. Its function is as follows. Catalyzes the transfer of the L-Ara4N moiety of the glycolipid undecaprenyl phosphate-alpha-L-Ara4N to lipid A. The modified arabinose is attached to lipid A and is required for resistance to polymyxin and cationic antimicrobial peptides. The protein is Undecaprenyl phosphate-alpha-4-amino-4-deoxy-L-arabinose arabinosyl transferase 2 of Pseudomonas fluorescens (strain Pf0-1).